The sequence spans 341 residues: UDP-3-O-acylglucosamine N-acyltransferase (341 aa).

H241 acts as the Proton acceptor in catalysis.

Belongs to the transferase hexapeptide repeat family. LpxD subfamily. In terms of assembly, homotrimer.

The catalysed reaction is a UDP-3-O-[(3R)-3-hydroxyacyl]-alpha-D-glucosamine + a (3R)-hydroxyacyl-[ACP] = a UDP-2-N,3-O-bis[(3R)-3-hydroxyacyl]-alpha-D-glucosamine + holo-[ACP] + H(+). It functions in the pathway bacterial outer membrane biogenesis; LPS lipid A biosynthesis. Its function is as follows. Catalyzes the N-acylation of UDP-3-O-acylglucosamine using 3-hydroxyacyl-ACP as the acyl donor. Is involved in the biosynthesis of lipid A, a phosphorylated glycolipid that anchors the lipopolysaccharide to the outer membrane of the cell. The sequence is that of UDP-3-O-acylglucosamine N-acyltransferase from Histophilus somni (strain 129Pt) (Haemophilus somnus).